The following is a 295-amino-acid chain: Nucleotide-binding protein llmg_1557 (295 aa).

Gly12 to Thr19 contacts ATP. Asp63–Ser66 contributes to the GTP binding site.

Belongs to the RapZ-like family.

Functionally, displays ATPase and GTPase activities. This Lactococcus lactis subsp. cremoris (strain MG1363) protein is Nucleotide-binding protein llmg_1557.